A 472-amino-acid chain; its full sequence is UDP-N-acetylmuramate--L-alanine ligase (472 aa).

Position 123-129 (123-129 (GSHGKTT)) interacts with ATP.

The protein belongs to the MurCDEF family.

It is found in the cytoplasm. The enzyme catalyses UDP-N-acetyl-alpha-D-muramate + L-alanine + ATP = UDP-N-acetyl-alpha-D-muramoyl-L-alanine + ADP + phosphate + H(+). The protein operates within cell wall biogenesis; peptidoglycan biosynthesis. Cell wall formation. The chain is UDP-N-acetylmuramate--L-alanine ligase from Solibacter usitatus (strain Ellin6076).